Reading from the N-terminus, the 244-residue chain is Protein crossbronx (244 aa).

Residues 20 to 176 enclose the UBC core domain; the sequence is QQEYKILAEY…VQENIKESKE (157 aa). The disordered stretch occupies residues 209 to 244; sequence AGRSKQTEPSAQQGNGGHATGLSWVKEGEFKPLSIE.

Belongs to the ubiquitin-conjugating enzyme family. FTS subfamily.

The sequence is that of Protein crossbronx (cbx) from Drosophila sechellia (Fruit fly).